Here is a 222-residue protein sequence, read N- to C-terminus: Ribosomal RNA small subunit methyltransferase G (222 aa).

Residues glycine 80, leucine 85, 131 to 132, and arginine 148 each bind S-adenosyl-L-methionine; that span reads VE.

The protein belongs to the methyltransferase superfamily. RNA methyltransferase RsmG family.

Its subcellular location is the cytoplasm. The catalysed reaction is guanosine(527) in 16S rRNA + S-adenosyl-L-methionine = N(7)-methylguanosine(527) in 16S rRNA + S-adenosyl-L-homocysteine. Functionally, specifically methylates the N7 position of guanine in position 527 of 16S rRNA. This Polynucleobacter asymbioticus (strain DSM 18221 / CIP 109841 / QLW-P1DMWA-1) (Polynucleobacter necessarius subsp. asymbioticus) protein is Ribosomal RNA small subunit methyltransferase G.